The chain runs to 356 residues: Peptide chain release factor 1 (356 aa).

The residue at position 233 (Q233) is an N5-methylglutamine.

The protein belongs to the prokaryotic/mitochondrial release factor family. Post-translationally, methylated by PrmC. Methylation increases the termination efficiency of RF1.

Its subcellular location is the cytoplasm. Functionally, peptide chain release factor 1 directs the termination of translation in response to the peptide chain termination codons UAG and UAA. The protein is Peptide chain release factor 1 of Halalkalibacterium halodurans (strain ATCC BAA-125 / DSM 18197 / FERM 7344 / JCM 9153 / C-125) (Bacillus halodurans).